Here is a 328-residue protein sequence, read N- to C-terminus: MSNNDFLVLKNITKAFGKAVVIDNLDLTIKRGTMVTLLGPSGCGKTTVLRLVAGLENPTSGQIFIDGEDVTKSSIQNRDICIVFQSYALFPHMSIGDNVGYGLKMQGIGKEERAQRVKEALELVDLAGFEDRFVDQISGGQQQRVALARALVLKPKVLLFDEPLSNLDANLRRSMREKIRELQQRLGITSLYVTHDQTEAFAVSDEVIVMNKGKIMQKAPAKELYLRPNSLFLANFMGESSIFDGKLENGVADINGYSVPLKDAAQFNLPDGECLVGIRPEAIYLAAEGSDAQRCEIKSAVYMGQPLGKWLQTGRGKDLLVNCKPEGF.

The ABC transporter domain occupies 7–237 (LVLKNITKAF…PNSLFLANFM (231 aa)). 39 to 46 (GPSGCGKT) serves as a coordination point for ATP.

It belongs to the ABC transporter superfamily. Fe(3+) ion importer (TC 3.A.1.10) family. In terms of assembly, the complex is composed of two ATP-binding proteins (FbpC), two transmembrane proteins (FbpB) and a solute-binding protein (FbpA).

It localises to the cell inner membrane. The catalysed reaction is Fe(3+)(out) + ATP + H2O = Fe(3+)(in) + ADP + phosphate + H(+). In terms of biological role, part of the ABC transporter complex FbpABC involved in Fe(3+) ions import. Responsible for energy coupling to the transport system. This Haemophilus influenzae (strain ATCC 51907 / DSM 11121 / KW20 / Rd) protein is Fe(3+) ions import ATP-binding protein FbpC 1.